An 819-amino-acid polypeptide reads, in one-letter code: Ribosome-releasing factor 2, mitochondrial (819 aa).

A mitochondrion-targeting transit peptide spans Met-1–Tyr-30. The tr-type G domain occupies Ser-39 to Ile-327. GTP-binding positions include Ala-48 to Thr-55, Asp-113 to His-117, and Asn-165 to Asp-168.

It belongs to the TRAFAC class translation factor GTPase superfamily. Classic translation factor GTPase family. EF-G/EF-2 subfamily.

Its subcellular location is the mitochondrion. Functionally, mitochondrial GTPase that mediates the disassembly of ribosomes from messenger RNA at the termination of mitochondrial protein biosynthesis. Not involved in the GTP-dependent ribosomal translocation step during translation elongation. This Saccharomyces cerevisiae (strain RM11-1a) (Baker's yeast) protein is Ribosome-releasing factor 2, mitochondrial.